A 300-amino-acid polypeptide reads, in one-letter code: Elongator complex protein 5 (300 aa).

Residue serine 252 is modified to Phosphoserine. The interval 264–300 is disordered; that stretch reads QQALLRPRPGQATSHIFYEPDAYDDLDQEDPDDDLDI. The segment covering 284–300 has biased composition (acidic residues); the sequence is DAYDDLDQEDPDDDLDI.

The protein belongs to the ELP5 family. Component of the elongator complex which consists of ELP1, ELP2, ELP3, ELP4, ELP5 and ELP6; in the complex, is required for optimal binding of ELP3 to ELP4. Post-translationally, tyrosine-phosphorylated. Ubiquitously expressed with high levels in heart, brain, liver, skeletal muscle and testis.

The protein resides in the nucleus. It localises to the cytoplasm. It participates in tRNA modification; 5-methoxycarbonylmethyl-2-thiouridine-tRNA biosynthesis. In terms of biological role, component of the elongator complex which is required for multiple tRNA modifications, including mcm5U (5-methoxycarbonylmethyl uridine), mcm5s2U (5-methoxycarbonylmethyl-2-thiouridine), and ncm5U (5-carbamoylmethyl uridine). The elongator complex catalyzes formation of carboxymethyluridine in the wobble base at position 34 in tRNAs. Involved in cell migration. This Homo sapiens (Human) protein is Elongator complex protein 5.